Consider the following 101-residue polypeptide: Small ribosomal subunit protein uS14 (101 aa).

It belongs to the universal ribosomal protein uS14 family. In terms of assembly, part of the 30S ribosomal subunit. Contacts proteins S3 and S10.

In terms of biological role, binds 16S rRNA, required for the assembly of 30S particles and may also be responsible for determining the conformation of the 16S rRNA at the A site. This is Small ribosomal subunit protein uS14 from Chelativorans sp. (strain BNC1).